The sequence spans 236 residues: Snake venom serine protease pallase (236 aa).

The 227-residue stretch at 1-227 (VIGGDECNIN…HLDWIENIIA (227 aa)) folds into the Peptidase S1 domain. 6 cysteine pairs are disulfide-bonded: Cys7–Cys139, Cys26–Cys42, Cys74–Cys234, Cys118–Cys188, Cys150–Cys167, and Cys178–Cys203. Catalysis depends on charge relay system residues His41 and Asp86. Ser182 acts as the Charge relay system in catalysis.

The protein belongs to the peptidase S1 family. Snake venom subfamily. As to quaternary structure, monomer. Expressed by the venom gland.

The protein resides in the secreted. Its function is as follows. Snake venom serine protease that may act in the hemostasis system of the prey. This chain is Snake venom serine protease pallase, found in Gloydius halys (Chinese water mocassin).